Consider the following 420-residue polypeptide: UDP-N-acetyl-D-mannosamine dehydrogenase (420 aa).

NAD(+) is bound by residues Y13, I14, D33, T85, and T126. 8 residues coordinate UDP-N-acetyl-alpha-D-mannosaminouronate: R160, V161, K212, N216, R219, H250, R252, and G263. Catalysis depends on K212, which acts as the Proton donor/acceptor. Residue C266 is the Nucleophile of the active site. 2 residues coordinate UDP-N-acetyl-alpha-D-mannosaminouronate: F330 and K331. R338 provides a ligand contact to NAD(+). K416 contacts UDP-N-acetyl-alpha-D-mannosaminouronate.

The protein belongs to the UDP-glucose/GDP-mannose dehydrogenase family. WecC subfamily. Homodimer.

It catalyses the reaction UDP-N-acetyl-alpha-D-mannosamine + 2 NAD(+) + H2O = UDP-N-acetyl-alpha-D-mannosaminouronate + 2 NADH + 3 H(+). The protein operates within bacterial outer membrane biogenesis; enterobacterial common antigen biosynthesis. Catalyzes the four-electron oxidation of UDP-N-acetyl-D-mannosamine (UDP-ManNAc), reducing NAD(+) and releasing UDP-N-acetylmannosaminuronic acid (UDP-ManNAcA). The protein is UDP-N-acetyl-D-mannosamine dehydrogenase of Salmonella typhi.